A 379-amino-acid polypeptide reads, in one-letter code: uncharacterized protein (379 aa).

Disordered stretches follow at residues 1 to 25, 128 to 158, and 355 to 379; these read MASD…EKGK, QGKT…IERT, and TEKT…QGDI. A compositionally biased stretch (polar residues) spans 128 to 141; it reads QGKTTSATTSNSTI.

This is an uncharacterized protein from Caenorhabditis elegans.